Reading from the N-terminus, the 337-residue chain is Glycerol-3-phosphate dehydrogenase [NAD(P)+] (337 aa).

4 residues coordinate NADPH: Ser17, Tyr18, His38, and Lys112. The sn-glycerol 3-phosphate site is built by Lys112, Gly141, and Thr143. Ala145 is an NADPH binding site. Lys197, Asp250, Ser260, Arg261, and Asn262 together coordinate sn-glycerol 3-phosphate. The active-site Proton acceptor is the Lys197. An NADPH-binding site is contributed by Arg261. Val285 and Glu287 together coordinate NADPH.

Belongs to the NAD-dependent glycerol-3-phosphate dehydrogenase family.

It localises to the cytoplasm. The enzyme catalyses sn-glycerol 3-phosphate + NAD(+) = dihydroxyacetone phosphate + NADH + H(+). It catalyses the reaction sn-glycerol 3-phosphate + NADP(+) = dihydroxyacetone phosphate + NADPH + H(+). It participates in membrane lipid metabolism; glycerophospholipid metabolism. In terms of biological role, catalyzes the reduction of the glycolytic intermediate dihydroxyacetone phosphate (DHAP) to sn-glycerol 3-phosphate (G3P), the key precursor for phospholipid synthesis. This Pasteurella multocida (strain Pm70) protein is Glycerol-3-phosphate dehydrogenase [NAD(P)+].